Consider the following 209-residue polypeptide: Protein GrpE (209 aa).

The segment covering 1–18 (MKIFNKDGNKNSKEDTKA) has biased composition (basic and acidic residues). Residues 1 to 60 (MKIFNKDGNKNSKEDTKAGAENSEAQNSGSSAEEVNKARENPEEASASSEAEKSPEVKCQ) are disordered. Residues 23 to 33 (SEAQNSGSSAE) show a composition bias toward polar residues. The span at 50–60 (EAEKSPEVKCQ) shows a compositional bias: basic and acidic residues.

It belongs to the GrpE family. In terms of assembly, homodimer.

The protein localises to the cytoplasm. Its function is as follows. Participates actively in the response to hyperosmotic and heat shock by preventing the aggregation of stress-denatured proteins, in association with DnaK and GrpE. It is the nucleotide exchange factor for DnaK and may function as a thermosensor. Unfolded proteins bind initially to DnaJ; upon interaction with the DnaJ-bound protein, DnaK hydrolyzes its bound ATP, resulting in the formation of a stable complex. GrpE releases ADP from DnaK; ATP binding to DnaK triggers the release of the substrate protein, thus completing the reaction cycle. Several rounds of ATP-dependent interactions between DnaJ, DnaK and GrpE are required for fully efficient folding. The chain is Protein GrpE from Methanosarcina barkeri (strain Fusaro / DSM 804).